The following is a 162-amino-acid chain: Phenazine biosynthesis protein PhzA1 (162 aa).

The protein belongs to the PhzA/PhzB family.

Its pathway is antibiotic biosynthesis; phenazine biosynthesis. In terms of biological role, involved in the biosynthesis of the antibiotic phenazine, a nitrogen-containing heterocyclic molecule. PhzA1 (operon phzA1B1C1E1F1G1) has a role in the biosynthesis of the phenazine during planktonic growth. This is Phenazine biosynthesis protein PhzA1 from Pseudomonas aeruginosa (strain ATCC 15692 / DSM 22644 / CIP 104116 / JCM 14847 / LMG 12228 / 1C / PRS 101 / PAO1).